Consider the following 185-residue polypeptide: MINEIKKDAQDRMEKSLEALKGHISKIRTGRAQPSLLDAIQVDYYGAATPLRQLANVVAEDARTLAVTVFDRSLIQAVEKAILTSDLGLNPSSAGTTIRVPLPPLTEERRRDLTKLVKAEGEQGKVAVRNVRRDANEKIKALLKDKEISENEQRKAEDDIQKLTDSFVKKVDEVLADKEKELMDF.

The protein belongs to the RRF family.

The protein resides in the cytoplasm. Functionally, responsible for the release of ribosomes from messenger RNA at the termination of protein biosynthesis. May increase the efficiency of translation by recycling ribosomes from one round of translation to another. In Actinobacillus succinogenes (strain ATCC 55618 / DSM 22257 / CCUG 43843 / 130Z), this protein is Ribosome-recycling factor.